A 986-amino-acid polypeptide reads, in one-letter code: E3 ubiquitin-protein ligase Arkadia (986 aa).

Glycyl lysine isopeptide (Lys-Gly) (interchain with G-Cter in SUMO2) cross-links involve residues lysine 19, lysine 28, lysine 34, lysine 47, lysine 59, lysine 73, lysine 87, lysine 96, and lysine 110. The segment covering 66-89 has biased composition (basic and acidic residues); it reads HLCDDSQKQEKDMNGNQQEQEKSL. Residues 66 to 106 are disordered; it reads HLCDDSQKQEKDMNGNQQEQEKSLVVRKKRKSQQAGPSYVQ. Residues 120 to 191 form a disordered region; the sequence is QHLGTPSDED…HKWPRTETES (72 aa). Residues 132–151 show a composition bias toward low complexity; it reads SSFSDCLSSPSSSLHFGDSD. The segment covering 164–173 has biased composition (polar residues); the sequence is RHSQTILNAK. Lysine 173 is covalently cross-linked (Glycyl lysine isopeptide (Lys-Gly) (interchain with G-Cter in SUMO2)). The span at 174–184 shows a compositional bias: basic residues; sequence SRSHSARSHKW. Residues lysine 198 and lysine 218 each participate in a glycyl lysine isopeptide (Lys-Gly) (interchain with G-Cter in SUMO2) cross-link. An interaction with AXIN1 region spans residues 241 to 404; sequence VLARRKYALL…VPTTSARMES (164 aa). Residues 248-277 are disordered; that stretch reads ALLPSSSSSSENDLSSESSSSSSTEGEEDL. The segment covering 252–271 has biased composition (low complexity); that stretch reads SSSSSSENDLSSESSSSSST. Residues 300-304 carry the SUMO interaction motif 1 (SIM) motif; the sequence is VVVIE. An SUMO interaction motif 2 (SIM) motif is present at residues 325–331; the sequence is EVEIVTV. Residues 337-373 are disordered; the sequence is SRSTLGHSRSHWSQGSSSHASRPQEPRNRSRISTVIQ. The segment covering 347–357 has biased composition (low complexity); sequence HWSQGSSSHAS. The short motif at 382–386 is the SUMO interaction motif 3 (SIM) element; that stretch reads VVDLT. Disordered regions lie at residues 389 to 471, 506 to 561, 610 to 646, 659 to 684, and 696 to 719; these read EDEP…ETGP, QQHG…SYHE, APSQPLSSIDGYGSSMVAQPQPQPPPQPSLSSCRHYM, HQASACPHSHGNPPPQTQPPPQVDYV, and ISSHATSHPVAPPPPTHLASTAAP. Positions 395 to 466 are enriched in polar residues; it reads VPTTSARMES…DSRRTTSSAV (72 aa). A compositionally biased stretch (basic residues) spans 508–522; the sequence is HGHHFQHHHHHHHTP. Residues 551–561 show a composition bias toward polar residues; sequence ANSSSGTSYHE. Pro residues predominate over residues 670-680; sequence NPPPQTQPPPQ. The segment at 907–909 is ubiquitin binding; that stretch reads YPH. Glycyl lysine isopeptide (Lys-Gly) (interchain with G-Cter in SUMO2) cross-links involve residues lysine 915 and lysine 919. Residues cysteine 934 and cysteine 937 each contribute to the Zn(2+) site. The segment at 934–975 adopts an RING-type; atypical zinc-finger fold; it reads CTICLSILEEGEDVRRLPCMHLFHQVCVDQWLITNKKCPICR. Residues 949-953 form a ubiquitin binding region; sequence RLPCM. Residues histidine 957 and cysteine 960 each contribute to the Zn(2+) site.

The protein belongs to the Arkadia family. Monomer. Interacts with SMAD6, SMAD7, AXIN1, AXIN2 and SKIL isoform SNON. Interacts with (phosphorylated) SMAD2 and SMAD3. Part of a complex containing RNF111, AXIN1 and SMAD7. Interacts (via SIM domains) with SUMO1 and SUMO2.

The protein resides in the nucleus. It localises to the cytoplasm. Its subcellular location is the PML body. It catalyses the reaction S-ubiquitinyl-[E2 ubiquitin-conjugating enzyme]-L-cysteine + [acceptor protein]-L-lysine = [E2 ubiquitin-conjugating enzyme]-L-cysteine + N(6)-ubiquitinyl-[acceptor protein]-L-lysine.. It functions in the pathway protein modification; protein ubiquitination. Its activity is regulated as follows. Binds free ubiquitin non-covalently via its RING-type zinc finger. Ubiquitin-binding leads to enhance the E3 ubiquitin-protein ligase activity by stabilizing the ubiquitin-conjugating enzyme E2 (donor ubiquitin) in the 'closed' conformation and activating ubiquitin transfer. In terms of biological role, E3 ubiquitin-protein ligase. Required for mesoderm patterning during embryonic development. Acts as an enhancer of the transcriptional responses of the SMAD2/SMAD3 effectors, which are activated downstream of BMP. Acts by mediating ubiquitination and degradation of SMAD inhibitors such as SMAD7, inducing their proteasomal degradation and thereby enhancing the transcriptional activity of TGF-beta and BMP. In addition to enhance transcription of SMAD2/SMAD3 effectors, also regulates their turnover by mediating their ubiquitination and subsequent degradation, coupling their activation with degradation, thereby ensuring that only effectors 'in use' are degraded. Activates SMAD3/SMAD4-dependent transcription by triggering signal-induced degradation of SNON isoform of SKIL. Associates with UBE2D2 as an E2 enzyme. Specifically binds polysumoylated chains via SUMO interaction motifs (SIMs) and mediates ubiquitination of sumoylated substrates. Catalyzes 'Lys-63'-linked ubiquitination of sumoylated XPC in response to UV irradiation, promoting nucleotide excision repair. Mediates ubiquitination and degradation of sumoylated PML. The regulation of the BMP-SMAD signaling is however independent of sumoylation and is not dependent of SUMO interaction motifs (SIMs). The sequence is that of E3 ubiquitin-protein ligase Arkadia (RNF111) from Pongo abelii (Sumatran orangutan).